The primary structure comprises 267 residues: Probable ribosomal RNA small subunit methyltransferase A (267 aa).

Residues Leu12, Gly37, Glu58, Asp83, and Asn100 each contribute to the S-adenosyl-L-methionine site.

The protein belongs to the class I-like SAM-binding methyltransferase superfamily. rRNA adenine N(6)-methyltransferase family. RsmA subfamily.

The protein localises to the cytoplasm. Specifically dimethylates two adjacent adenosines in the loop of a conserved hairpin near the 3'-end of 16S rRNA in the 30S particle. May play a critical role in biogenesis of 30S subunits. This is Probable ribosomal RNA small subunit methyltransferase A from Methanococcus vannielii (strain ATCC 35089 / DSM 1224 / JCM 13029 / OCM 148 / SB).